We begin with the raw amino-acid sequence, 256 residues long: Trypsin, alkaline B (256 aa).

The N-terminal stretch at Met1–Ala17 is a signal peptide. The propeptide at Val18–Arg24 is activation peptide. The region spanning Ile25–Ser256 is the Peptidase S1 domain. Cys55 and Cys71 are oxidised to a cystine. Residues His70 and Asp115 each act as charge relay system in the active site. 2 disulfides stabilise this stretch: Cys180-Cys197 and Cys209-Cys233. The active-site Charge relay system is Ser213.

It belongs to the peptidase S1 family. As to expression, midgut.

It localises to the secreted. Its subcellular location is the extracellular space. It catalyses the reaction Preferential cleavage: Arg-|-Xaa, Lys-|-Xaa.. The protein is Trypsin, alkaline B of Manduca sexta (Tobacco hawkmoth).